A 722-amino-acid chain; its full sequence is Homeobox-leucine zipper protein HDG11 (722 aa).

A compositionally biased stretch (gly residues) spans 1–19 (MSFVVGVGGSGSGSGGDGG). The interval 1–42 (MSFVVGVGGSGSGSGGDGGGSHHHDGSETDRKKKRYHRHTAQ) is disordered. Basic and acidic residues predominate over residues 20–31 (GSHHHDGSETDR). The homeobox DNA-binding region spans 32-91 (KKKRYHRHTAQQIQRLESSFKECPHPDEKQRNQLSRELGLAPRQIKFWFQNRRTQLKAQH). Residues 81 to 161 (QNRRTQLKAQ…LERMSTIASK (81 aa)) are a coiled coil. The START domain maps to 227 to 460 (SDMDKPIMTG…LQRMCERFAS (234 aa)).

The protein belongs to the HD-ZIP homeobox family. Class IV subfamily. As to quaternary structure, interacts with BBM. As to expression, expressed in apical meristems and young epidermal tissue including trichomes and stipules. Expressed in lateral root tips, the L1 layer of apical inflorescence meristems and early flower primordia, carpel and petal epidermis, stigma papillae, ovule primordia, nucellus and embryo.

It localises to the nucleus. Its function is as follows. Transcription factor which acts as a positive regulator of drought stress tolerance. Can transactivate CIPK3, NCED3 and ERECTA. Transactivates several cell-wall-loosening protein genes by directly binding to HD motifs in their promoters. These target genes play important roles in coordinating cell-wall extensibility with root development and growth. Transactivates CYP74A/AOS, AOC3, OPR3 and 4CLL5/OPCL1 genes by directly binding to HD motifs in their promoters. These target genes are involved in jasmonate (JA) biosynthesis, and JA signaling affects root architecture by activating auxin signaling, which promotes lateral root formation. Acts as a negative regulator of trichome branching. Required for the establishment of giant cell identity on the abaxial side of sepals. Seems to promote cell differentiation. May regulate cell differentiation and proliferation during root and shoot meristem development. This chain is Homeobox-leucine zipper protein HDG11, found in Arabidopsis thaliana (Mouse-ear cress).